A 227-amino-acid chain; its full sequence is MKFAVIQFPGSNCDLDMLHAIRDSIGEEAEYVWHAETSLAGFDAVLLPGGFSYGDYLRTGAIAKFSSIMPEVLRFAEMGKPVLGVCNGFQILTEIGLLPGALIRNNNLHFICKTVPLRVANASTMFTELYEEGEIIQVPVAHGEGNYYCDDETLLKLKENNQIVFTYDSVNPNGSRADIAGIVNERGNVLGMMPHPERAVEEIIGGTDGLRLFESVVKAWKEEQVNA.

Positions 2 to 226 constitute a Glutamine amidotransferase type-1 domain; the sequence is KFAVIQFPGS…VKAWKEEQVN (225 aa). The Nucleophile role is filled by cysteine 86. Residues histidine 195 and glutamate 197 contribute to the active site.

As to quaternary structure, part of the FGAM synthase complex composed of 1 PurL, 1 PurQ and 2 PurS subunits.

The protein localises to the cytoplasm. The enzyme catalyses N(2)-formyl-N(1)-(5-phospho-beta-D-ribosyl)glycinamide + L-glutamine + ATP + H2O = 2-formamido-N(1)-(5-O-phospho-beta-D-ribosyl)acetamidine + L-glutamate + ADP + phosphate + H(+). It catalyses the reaction L-glutamine + H2O = L-glutamate + NH4(+). It functions in the pathway purine metabolism; IMP biosynthesis via de novo pathway; 5-amino-1-(5-phospho-D-ribosyl)imidazole from N(2)-formyl-N(1)-(5-phospho-D-ribosyl)glycinamide: step 1/2. Part of the phosphoribosylformylglycinamidine synthase complex involved in the purines biosynthetic pathway. Catalyzes the ATP-dependent conversion of formylglycinamide ribonucleotide (FGAR) and glutamine to yield formylglycinamidine ribonucleotide (FGAM) and glutamate. The FGAM synthase complex is composed of three subunits. PurQ produces an ammonia molecule by converting glutamine to glutamate. PurL transfers the ammonia molecule to FGAR to form FGAM in an ATP-dependent manner. PurS interacts with PurQ and PurL and is thought to assist in the transfer of the ammonia molecule from PurQ to PurL. This is Phosphoribosylformylglycinamidine synthase subunit PurQ from Listeria monocytogenes serotype 4a (strain HCC23).